Reading from the N-terminus, the 849-residue chain is Putative pentatricopeptide repeat-containing protein At5g08490 (849 aa).

20 PPR repeats span residues 20 to 54, 55 to 89, 121 to 155, 156 to 187, 188 to 222, 223 to 260, 262 to 296, 297 to 327, 329 to 363, 365 to 399, 400 to 430, 431 to 465, 469 to 499, 501 to 531, 532 to 566, 567 to 597, 601 to 631, 632 to 666, 667 to 702, and 703 to 733; these read DHRVFLDVVKACASVSDLTSGRALHGCVFKLGHIA, CSEVSKSVLNMYAKCRRMDDCQKMFRQMDSLDPVV, SSVTFAIVLPLCVRLGDSYNGKSMHSYIIKAGLEK, DTLVGNALVSMYAKFGFIFPDAYTAFDGIADK, DVVSWNAIIAGFSENNMMADAFRSFCLMLKEPTEP, NYATIANVLPVCASMDKNIACRSGRQIHSYVVQRSWLQ, HVFVCNSLVSFYLRVGRIEEAASLFTRMGSKDLVS, WNVVIAGYASNCEWFKAFQLFHNLVHKGDVS, DSVTIISILPVCAQLTDLASGKEIHSYILRHSYLL, DTSVGNALISFYARFGDTSAAYWAFSLMSTKDIIS, WNAILDAFADSPKQFQFLNLLHHLLNEAITL, DSVTILSLLKFCINVQGIGKVKEVHGYSVKAGLLH, EPKLGNALLDAYAKCGNVEYAHKIFLGLSER, TLVSYNSLLSGYVNSGSHDDAQMLFTEMSTT, DLTTWSLMVRIYAESCCPNEAIGVFREIQARGMRP, NTVTIMNLLPVCAQLASLHLVRQCHGYIIRG, DIRLKGTLLDVYAKCGSLKHAYSVFQSDARR, DLVMFTAMVAGYAVHGRGKEALMIYSHMTESNIKP, DHVFITTMLTACCHAGLIQDGLQIYDSIRTVHGMKP, and TMEQYACAVDLIARGGRLDDAYSFVTQMPVE. The type E motif stretch occupies residues 738–813; sequence IWGTLLRACT…PAGCSWLEVD (76 aa). Residues 814-844 are type E(+) motif; that stretch reads GQRNVFVSGDCSHPRRDSIFDLVNALYLQMK.

Belongs to the PPR family. PCMP-E subfamily.

This chain is Putative pentatricopeptide repeat-containing protein At5g08490 (PCMP-E32), found in Arabidopsis thaliana (Mouse-ear cress).